A 328-amino-acid polypeptide reads, in one-letter code: Fe(3+) ions import ATP-binding protein FbpC 1 (328 aa).

In terms of domain architecture, ABC transporter spans 7 to 237 (LVLKNITKAF…PNSLFLANFM (231 aa)). 39 to 46 (GPSGCGKT) provides a ligand contact to ATP.

The protein belongs to the ABC transporter superfamily. Fe(3+) ion importer (TC 3.A.1.10) family. The complex is composed of two ATP-binding proteins (FbpC), two transmembrane proteins (FbpB) and a solute-binding protein (FbpA).

It is found in the cell inner membrane. The enzyme catalyses Fe(3+)(out) + ATP + H2O = Fe(3+)(in) + ADP + phosphate + H(+). Functionally, part of the ABC transporter complex FbpABC involved in Fe(3+) ions import. Responsible for energy coupling to the transport system. This chain is Fe(3+) ions import ATP-binding protein FbpC 1, found in Haemophilus influenzae (strain ATCC 51907 / DSM 11121 / KW20 / Rd).